A 488-amino-acid polypeptide reads, in one-letter code: UDP-N-acetylmuramoyl-L-alanyl-D-glutamate--2,6-diaminopimelate ligase (488 aa).

UDP-N-acetyl-alpha-D-muramoyl-L-alanyl-D-glutamate contacts are provided by residues Leu-24, Ser-26, and 41–43 (HQV). ATP is bound at residue 113 to 119 (GTNGKTT). UDP-N-acetyl-alpha-D-muramoyl-L-alanyl-D-glutamate is bound by residues Asn-154, 155–156 (TT), Ser-182, Gln-188, and Arg-190. Position 222 is an N6-carboxylysine (Lys-222). Meso-2,6-diaminopimelate-binding positions include Arg-386, 410-413 (DNPR), Gly-461, and Glu-465. Residues 410-413 (DNPR) carry the Meso-diaminopimelate recognition motif motif.

It belongs to the MurCDEF family. MurE subfamily. Mg(2+) serves as cofactor. Post-translationally, carboxylation is probably crucial for Mg(2+) binding and, consequently, for the gamma-phosphate positioning of ATP.

The protein resides in the cytoplasm. The enzyme catalyses UDP-N-acetyl-alpha-D-muramoyl-L-alanyl-D-glutamate + meso-2,6-diaminopimelate + ATP = UDP-N-acetyl-alpha-D-muramoyl-L-alanyl-gamma-D-glutamyl-meso-2,6-diaminopimelate + ADP + phosphate + H(+). It participates in cell wall biogenesis; peptidoglycan biosynthesis. Functionally, catalyzes the addition of meso-diaminopimelic acid to the nucleotide precursor UDP-N-acetylmuramoyl-L-alanyl-D-glutamate (UMAG) in the biosynthesis of bacterial cell-wall peptidoglycan. This chain is UDP-N-acetylmuramoyl-L-alanyl-D-glutamate--2,6-diaminopimelate ligase, found in Haemophilus influenzae (strain ATCC 51907 / DSM 11121 / KW20 / Rd).